The primary structure comprises 1236 residues: MRFPAKIVWLVLWTVCVAEDCKEPPPRKETEILSGSWTEQTYQEGTQATYKCRPGYRTLGSIVMMCRGGKWVSLHPSRICRKKPCAHPGDTPFGSFHLAEGTQFEYGAKVVYTCDEGYQMVGEMNFRECDTNGWTNDIPICEVVKCLPVTEPENGKIFSDALEPDQEYTYGQVVQFECNSGYMLDGPKQIHCSAGGVWSAETPKCVEIFCKTPVILNGQAVLPKATYKANERVQYRCAAGFEYGQRGDTICTKSGWTPAPTCIEITCDPPRIPNGVYRPELSKYRGQDKITYECKKGFFPEIRGTDATCTRDGWVPVPRCAWKPCSYPVIKHGRLYYSYRGYFPARVNQQFVYSCDHHFVPPSQRSWDHLTCTAEGWSPEEPCLRQCIFNYLENGHTPYREEKYLQGETVRVRCYEGYSLQNDQNTMTCTESGWSPPPRCIRVKTCSKSNIRIENGFLSESTFTYPLNKQTEYKCKPGYVTADGKTSGLITCLKNGWSAQPVCIKSCDRPVFEKARVKSDGTWFRLNDRLDYECVDGYENRDGRTTGSIVCGQDGWSDKAACYERECSIPEMDPYLNAYPRKETYKVGDVLKFSCSQGRIMVGADSVQCYHFGWSPKLPTCKVKKVKSCALPPELPNGKRKEIHKEEYAHNEVVEYACNPRFLMKGSHKIQCVDGEWTALPVCIEEERTCGNIPDLDHGDVKPSVPPYHHGDSVEFSCREAFTMIGPRFITCISGEWTQPPQCIATDELRKCKGSTLFPPEGRQAHKIEYDHNTNKSYQCRGKSEHKHSICINGEWDPKVDCNEEAKIQLCPPPPQVPNACDMTTTVNYQDGEKISILCKENYLIQDAEEIVCKDGRWQSIPRCIEKIGCSQPPQIDHGTISSSSSAEERREIHEQRLYAHGTKLSYTCEEGFEISENNVIICHMGKWSSPPQCVGLPCGLPPYVQNGVVSHKKDRYQYGEEVTYDCDEGFGTDGPASIRCLGGEWSRPQDCISTNCVNLPTFEDAVLTDREKDFYRSGEQVAFKCLSYYQLDGSNTIQCIKSKWIGRPACRDVSCGNPPQVENAIIHNQKSKYQSEERARYECIGNYDLFGEMEVVCLNGTWTEPPQCKDSQGKCGPPPPIDNGDITSLLQSVYPPGMIVEYRCQAYYELRGNKNVVCRNGEWSQLPKCLEACVISEETMRKHHIQLRWKHDKKIYSKTEDTIEFMCQHGYRQLTPKHTFRATCREGKVVYPRCG.

An N-terminal signal peptide occupies residues 1 to 18; it reads MRFPAKIVWLVLWTVCVA. Sushi domains lie at 19–82, 83–143, 144–207, 208–264, 265–322, 325–383, 385–442, 444–505, 507–562, 565–623, 627–685, 688–745, 750–804, 809–866, 868–936, 937–994, 995–1053, 1054–1111, 1114–1172, and 1173–1235; these read EDCK…ICRK, KPCA…ICEV, VKCL…KCVE, IFCK…TCIE, ITCD…RCAW, CSYP…EEPC, RQCI…RCIR, KTCS…VCIK, CDRP…KAAC, RECS…TCKV, KSCA…VCIE, RTCG…QCIA, RKCK…DCNE, QLCP…RCIE, IGCS…QCVG, LPCG…DCIS, TNCV…ACRD, VSCG…QCKD, GKCG…KCLE, and ACVI…YPRC. 40 cysteine pairs are disulfide-bonded: cysteine 21/cysteine 66, cysteine 52/cysteine 80, cysteine 85/cysteine 129, cysteine 114/cysteine 141, cysteine 146/cysteine 192, cysteine 178/cysteine 205, cysteine 210/cysteine 251, cysteine 237/cysteine 262, cysteine 267/cysteine 309, cysteine 294/cysteine 320, cysteine 325/cysteine 372, cysteine 355/cysteine 383, cysteine 387/cysteine 429, cysteine 414/cysteine 440, cysteine 446/cysteine 492, cysteine 475/cysteine 503, cysteine 507/cysteine 551, cysteine 534/cysteine 562, cysteine 567/cysteine 609, cysteine 595/cysteine 621, cysteine 629/cysteine 672, cysteine 658/cysteine 683, cysteine 690/cysteine 732, cysteine 718/cysteine 743, cysteine 752/cysteine 791, cysteine 780/cysteine 802, cysteine 811/cysteine 853, cysteine 839/cysteine 864, cysteine 870/cysteine 923, cysteine 909/cysteine 934, cysteine 939/cysteine 981, cysteine 967/cysteine 992, cysteine 997/cysteine 1040, cysteine 1026/cysteine 1051, cysteine 1056/cysteine 1098, cysteine 1084/cysteine 1109, cysteine 1116/cysteine 1159, cysteine 1145/cysteine 1170, cysteine 1174/cysteine 1225, and cysteine 1208/cysteine 1235. Tyrosine 168 and tyrosine 170 each carry sulfotyrosine. A sulfotyrosine mark is found at tyrosine 465 and tyrosine 473. Tyrosine 575, tyrosine 579, and tyrosine 585 each carry sulfotyrosine. Asparagine 775 carries N-linked (GlcNAc...) asparagine glycosylation. N-linked (GlcNAc...) asparagine glycosylation is present at asparagine 1100.

Homodimer. Also forms homooligomers. Interacts with complement protein C3b; this interaction inhibits complement activation. Interacts with complement protein C3d. Interacts with CR3/ITGAM; this interaction mediates adhesion of neutrophils to pathogens leading to pathogen clearance. In terms of processing, sulfated on tyrosine residues. In terms of tissue distribution, CFH is one of the most abundant complement components in blood where the liver is the major source of CFH protein in vivo. in addition, CFH is secreted by additional cell types including monocytes, fibroblasts, or endothelial cells.

It is found in the secreted. In terms of biological role, glycoprotein that plays an essential role in maintaining a well-balanced immune response by modulating complement activation. Acts as a soluble inhibitor of complement, where its binding to self markers such as glycan structures prevents complement activation and amplification on cell surfaces. Accelerates the decay of the complement alternative pathway (AP) C3 convertase C3bBb, thus preventing local formation of more C3b, the central player of the complement amplification loop. As a cofactor of the serine protease factor I, CFH also regulates proteolytic degradation of already-deposited C3b. In addition, mediates several cellular responses through interaction with specific receptors. For example, interacts with CR3/ITGAM receptor and thereby mediates the adhesion of human neutrophils to different pathogens. In turn, these pathogens are phagocytosed and destroyed. This is Complement factor H (CFH) from Bos taurus (Bovine).